A 465-amino-acid chain; its full sequence is Protein Loquacious (465 aa).

Residues 1–337 (MDQENFHGSS…DSICGELEGE (337 aa)) form a necessary for enhancing pre-miRNA processing by Dcr-1 region. The not required for interaction with Dcr-1 stretch occupies residues 1 to 379 (MDQENFHGSS…TLKNATGKKL (379 aa)). The segment at 1-392 (MDQENFHGSS…QKTCLKNNKI (392 aa)) is important for homodimerization and interaction with Dcr-1. The tract at residues 129–211 (NGLAMKTPVS…DKLIGAQLPE (83 aa)) is sufficient for binding RNA. The interval 129–322 (NGLAMKTPVS…WMRLQETPID (194 aa)) is necessary for promoting preferential binding of Dcr-2 to the less stably base paired ends of siRNAs. Residues 135–206 (TPVSILQELL…ARALIDKLIG (72 aa)) enclose the DRBM 1 domain. The enables simultaneous binding of both DRBM 1 and 2 domains to dsRNA stretch occupies residues 209-249 (LPESPSSSAGPSVTGLTVAGSGGDGNANATGGGDASDKTVG). The segment at 210-246 (PESPSSSAGPSVTGLTVAGSGGDGNANATGGGDASDK) is disordered. Positions 211–223 (ESPSSSAGPSVTG) are enriched in polar residues. The interval 220–465 (SVTGLTVAGS…LEYLKIMTKK (246 aa)) is necessary and sufficient for enhancing processing of pre-miRNAs by Dcr-1. Residues 228–242 (GSGGDGNANATGGGD) are compositionally biased toward gly residues. The segment at 245 to 322 (DKTVGNPIGW…WMRLQETPID (78 aa)) is sufficient for binding RNA. Positions 250-318 (NPIGWLQEMC…AHRMWMRLQE (69 aa)) constitute a DRBM 2 domain. Positions 308–309 (AA) are necessary for binding pre-miRNA. The tract at residues 338 to 359 (PRSSENYYGELKDISVPTLTTQ) is required for binding to Dcr-2 and to fully enhance Dcr-2 mediated cleavage of 3' overhanging termini (3'ovr) and blunt termini (BLT) dsRNAs. However, this region is dispensable for binding the dsRNA substrates. A necessary for interaction with Dcr-1 region spans residues 340-465 (SSENYYGELK…LEYLKIMTKK (126 aa)). The interval 392 to 463 (IDYIKLLGEI…NALEYLKIMT (72 aa)) is sufficent for binding to Dcr-1. In terms of domain architecture, DRBM 3 spans 393–461 (DYIKLLGEIA…AQNALEYLKI (69 aa)).

Homodimer. In terms of assembly, interacts with dicer enzyme Dcr-1. As to quaternary structure, component of the miRNA-directed RNA-induced loading complex (miRLC), composed of at least Dcr-1, AGO1 and loqs isoform PB (loqs-PB), which processes pre-miRNAs and loads the resulting miRNAs into the Argonaute 1 (AGO1)-containing RNA-induced silencing complex (miRISC) to target the selective destruction of homologous RNAs. Interacts (via DRBM 3 domain) with dicer enzyme Dcr-1 (via helicase domain). Different regions of the Dcr-1-loqs-PB heterodimer collaborate to recognize, bind and position the pre-miRNA for Dcr-1 mediated cleavage. In the absence of miRNA substrates, the heterodimer favors a closed, catalytically incompetent, conformation, whereas binding of authentic pre-miRNA substrates stabilizes the relatively rare open, catalytically competent, conformation of the heterodimer. During substrate recognition, the Dcr-1 PAZ domain and pre-miRNA interact with the DRBM 1 domain of loqs-PB, which likely contributes to substrate recognition and stabilization. At the miRNA binding stage, the Dcr-1 DRBM domain and the loqs-PB DRBM domains then bind the pre-miRNA in tandem to form a tight 'belt' around the pre-miRNA stem, the pre-miRNA loop is docked in the loop-binding region formed by DUF283, DRBM and part of the helicase domain of Dcr-1, and the loqs-PB DRBM 1 and the wing domain of Dcr-1 act together to bind the 5' and 3' pre-miRNA termini within the PAZ and platform domains of Dcr-1. These interactions between the proteins and their pre-miRNA substrate stabilize a distorted form of the pre-miRNA and position the scissile phosphodiester bonds of the pre-miRNA at the RNase III catalytic cleavage sites of Dcr-1. Following Dcr-1 mediated cleavage, the miRNA duplex remains bound to loqs-PB DRBM 1, which dissociates from the Dcr-1 RNase III 1 domain but remains in contact with the PAZ and wing domains suggesting that the heterodimer presents the mature miRNA to AGO2 for loading into the RNA-induced silencing complex (miRISC). Able to interact with dicer enzyme Dcr-1. However, the relevance of such an interaction is unclear in vivo and another report found that it did not interact with Dcr-1. In terms of assembly, monomer. Interacts (via C-terminus) with dicer enzyme Dcr-2 (via N-terminus); interaction is required for RNAi activity in producing siRNAs from a subset of endo- and exo-dsRNAs, and in the alternative siRLC, the interaction enhances the binding preference of the protein for the thermodynamically more stable ends of endogenous siRNAs. Interaction with Dcr-2 is RNA independent, however the isoform must bind both dsRNA and Dcr-2 to enhance Dcr-2 cleavage activity. Does not interact with Dcr-1. As to expression, strong expression in males and females. Expression in ovaries is relatively weak. In terms of tissue distribution, strong expression in females and relatively weak expression in males. Strong expression in ovaries.

It localises to the cytoplasm. The protein localises to the cytosol. Double-stranded RNA-binding protein which can function in gene silencing by acting with Dcr-1 to enhance its ATP-independent processing of a specific subset of precursor micro-RNAs (pre-miRNAs) to mature miRNAs. Some reports found it was able to enhance the efficiency of pre-miRNA processing by Dcr-1, and can shift the cleavage site of Dcr-1 altering the length of the mature miRNAs produced by Dcr-1 alone. However, in contrast to isoform PB, it is not necessary or sufficient for enhancing miRNA biogenesis, and is not required for development or female germline stem cell (GSC) maintenance. Another report also found that it decreases binding of Dcr-1 to the miRNA substrate let-7. Functionally, double-stranded RNA-binding protein which functions in gene silencing by acting with Dcr-1 to enhance its ATP-independent processing of a specific subset of precursor micro-RNAs (pre-miRNAs) to mature miRNAs. Function is essential for development and female germline stem cell (GSC) maintenance. Functions in miRNA-mediated gene silencing by enhancing the binding affinity and specific pre-miRNA processing activity of Dcr-1, and as part of the loqs-PB-Dcr-1 complex, is involved in substrate discrimination, correctly positioning the pre-miRNA in the Dcr-1 catalytic center for cleavage, and miRNA loading into the Argonaute 1 (Ago1)-containing RNA-induced silencing complex (miRISC). Increases the binding affinity of Dcr-1 to pre-miRNAs, thereby increasing dicing efficiency and broadening the range of substrates that can be processed by the dicer. It may also confer the substrate specificity of Dcr-1 towards pre-miRNAs, as in its absence Dcr-1 displays siRNA-generating activity towards long dsRNA substrates. It can also shift the cleavage site of Dcr-1 for a small number of pre-miRNAs, changing the length of the mature miRNAs produced by Dcr-1 alone. Increases the range of pre-miRNAs that can be processed by Dcr-1, by enhancing the dicing of suboptimal hairpin substrates including ones with mismatches at the dicing site. This function may also promote the generation of novel miRNA genes as it appears to have an important role in processing evolutionarily young miRNA genes, suggesting that it may also enhance dicing of substrates that have not acquired hairpin features required for efficient miRNA processing. As newly emerged miRNAs can have deleterious or beneficial effects on fitness, this function is likely part of a regulatory system that prevents excessive emergence of active miRNA genes and thus keeps them within an optimal range. Also forms a RISC loading complex (miRLC) with Dcr-1 to mediate Ago1-loading of mature miRNAs into the RNA-induced silencing complex (miRISC). In female ovaries, required for Dcr-1 to generate the twenty-three nucleotide isomiR variant of miR-307a which is able to repress its targets Gk2 and tara. In terms of biological role, double-stranded RNA-binding protein which has an essential role in gene silencing (RNAi) by acting with Dcr-2 to enhance its ATP-dependent processing of a subset of endogenous (endo) and exogenous (exo) dsRNAs into short interfering RNAs (siRNAs). Functions in RNAi by increasing the initial binding affinity of Dcr-2 to certain dsRNA substrates, and in the absence of r2d2, may also function in siRNA loading into the Argonaute 2 (AGO2)-containing RNA-induced silencing complex (siRISC) and guide strand selection for target silencing by the siRISC. Promotes Dcr-2 cleavage of a subset of dsRNAs, including endo-dsRNAs derived from convergent transcription, inverted repeats and transposons. Also enables Dcr-2 to produce hairpin-derived endo-siRNAs in the presence of cellular inhibitory inorganic phosphate, likely by increasing the binding affinity of the enzyme to the hairpin dsRNAs allowing the dsRNA to displace phosphate bound to Dcr-2. According to many reports, the cleavage reaction mode of Dcr-2 changes according to the termini of the dsRNA substrate, with the enzyme displaying a preference for processing blunt termini (BLT), likely non-self dsRNAs, over dsRNAs with 2 nucleotides 3' overhanging (3'ovr) termini, which are typically the structure of endo-dsRNAs. According to many reports, interaction with Loqs-PD modifies the molecular recognition mechanisms of Dcr-2 towards sub-optimal 3'ovr dsRNA substrates and thus enables the dicer to cleave endo-dsRNA templates with diverse termini. However, according to another report, the mode of cleavage reaction is not affected by the presence or absence of loqs-PD. In the absence of r2d2, may also form an alternative RISC loading complex (siRLC) with Dcr-2 to mediate AGO2-loading of endo- and exo-siRNAs into the RNA-induced silencing complex (siRISC). Many reports suggest that loqs-PD and r2d2 function independently with dcr-2 in distinct siRNA pathways, and may even compete for binding to the enzyme. Loaded siRNAs serve as a guide to direct the siRISC to complementary RNAs to degrade them or prevent their translation. The siRLC plays an important role in the ATP-dependent asymmetry sensing of the duplex, and is therefore also responsible for the selection of the strand that ultimately acts as the guide siRNA for the siRISC. Thermodynamically asymmetric endo-siRNAs can be pre-oriented in the siRLC by the Loqs-PD and DCr-2 complex, which preferentially binds to the most thermodynamically stable strand prior to loading into the siRISC. Appears to be involved in promoting double-strand breaks (DSBs) following exposure to a low-dose/dose-rate (LDR) of ionizing radiation. This chain is Protein Loquacious, found in Drosophila melanogaster (Fruit fly).